Here is a 237-residue protein sequence, read N- to C-terminus: Ribonuclease PH (237 aa).

Residues R86 and 124-126 (GTR) contribute to the phosphate site.

Belongs to the RNase PH family. In terms of assembly, homohexameric ring arranged as a trimer of dimers.

The catalysed reaction is tRNA(n+1) + phosphate = tRNA(n) + a ribonucleoside 5'-diphosphate. Phosphorolytic 3'-5' exoribonuclease that plays an important role in tRNA 3'-end maturation. Removes nucleotide residues following the 3'-CCA terminus of tRNAs; can also add nucleotides to the ends of RNA molecules by using nucleoside diphosphates as substrates, but this may not be physiologically important. Probably plays a role in initiation of 16S rRNA degradation (leading to ribosome degradation) during starvation. This is Ribonuclease PH from Shewanella sp. (strain ANA-3).